A 177-amino-acid chain; its full sequence is T-cell receptor beta chain C region (177 aa).

The segment at 1–150 (EDLANVSAPQ…GVLSATVLYE (150 aa)) is c region. 2 N-linked (GlcNAc...) asparagine glycosylation sites follow: Asn-5 and Asn-22. Cys-31 and Cys-96 are oxidised to a cystine. The helical transmembrane segment at 146–168 (TVLYEILLGKATLYAVLVSALVL) threads the bilayer. The Cytoplasmic portion of the chain corresponds to 169 to 177 (MAMVKRKDS).

It is found in the membrane. In Oryctolagus cuniculus (Rabbit), this protein is T-cell receptor beta chain C region.